The sequence spans 132 residues: Protein NrdI (132 aa).

This sequence belongs to the NrdI family.

Probably involved in ribonucleotide reductase function. The protein is Protein NrdI of Bartonella quintana (strain Toulouse) (Rochalimaea quintana).